Reading from the N-terminus, the 322-residue chain is Acetyl-coenzyme A carboxylase carboxyl transferase subunit alpha (322 aa).

The CoA carboxyltransferase C-terminal domain occupies 39-293 (RLQKKSQALT…RRALTDTLAE (255 aa)).

The protein belongs to the AccA family. In terms of assembly, acetyl-CoA carboxylase is a heterohexamer composed of biotin carboxyl carrier protein (AccB), biotin carboxylase (AccC) and two subunits each of ACCase subunit alpha (AccA) and ACCase subunit beta (AccD).

The protein localises to the cytoplasm. The enzyme catalyses N(6)-carboxybiotinyl-L-lysyl-[protein] + acetyl-CoA = N(6)-biotinyl-L-lysyl-[protein] + malonyl-CoA. Its pathway is lipid metabolism; malonyl-CoA biosynthesis; malonyl-CoA from acetyl-CoA: step 1/1. In terms of biological role, component of the acetyl coenzyme A carboxylase (ACC) complex. First, biotin carboxylase catalyzes the carboxylation of biotin on its carrier protein (BCCP) and then the CO(2) group is transferred by the carboxyltransferase to acetyl-CoA to form malonyl-CoA. In Thiobacillus denitrificans (strain ATCC 25259 / T1), this protein is Acetyl-coenzyme A carboxylase carboxyl transferase subunit alpha.